The chain runs to 437 residues: Trigger factor (437 aa).

Residues 161–246 (DDQVNIDFVG…VNSVSAPQLP (86 aa)) enclose the PPIase FKBP-type domain.

This sequence belongs to the FKBP-type PPIase family. Tig subfamily.

The protein resides in the cytoplasm. It carries out the reaction [protein]-peptidylproline (omega=180) = [protein]-peptidylproline (omega=0). Functionally, involved in protein export. Acts as a chaperone by maintaining the newly synthesized protein in an open conformation. Functions as a peptidyl-prolyl cis-trans isomerase. The chain is Trigger factor from Pseudomonas putida (strain W619).